We begin with the raw amino-acid sequence, 275 residues long: 2,3,4,5-tetrahydropyridine-2,6-dicarboxylate N-succinyltransferase (275 aa).

Residues arginine 106 and aspartate 143 each contribute to the substrate site.

The protein belongs to the transferase hexapeptide repeat family. In terms of assembly, homotrimer.

The protein resides in the cytoplasm. It catalyses the reaction (S)-2,3,4,5-tetrahydrodipicolinate + succinyl-CoA + H2O = (S)-2-succinylamino-6-oxoheptanedioate + CoA. Its pathway is amino-acid biosynthesis; L-lysine biosynthesis via DAP pathway; LL-2,6-diaminopimelate from (S)-tetrahydrodipicolinate (succinylase route): step 1/3. This chain is 2,3,4,5-tetrahydropyridine-2,6-dicarboxylate N-succinyltransferase, found in Cupriavidus necator (strain ATCC 17699 / DSM 428 / KCTC 22496 / NCIMB 10442 / H16 / Stanier 337) (Ralstonia eutropha).